A 147-amino-acid polypeptide reads, in one-letter code: 3-dehydroquinate dehydratase (147 aa).

Tyr-23 functions as the Proton acceptor in the catalytic mechanism. The substrate site is built by Asn-74, His-80, and Asp-87. Catalysis depends on His-100, which acts as the Proton donor. Substrate contacts are provided by residues 101 to 102 (LS) and Arg-111.

This sequence belongs to the type-II 3-dehydroquinase family. As to quaternary structure, homododecamer.

The enzyme catalyses 3-dehydroquinate = 3-dehydroshikimate + H2O. It functions in the pathway metabolic intermediate biosynthesis; chorismate biosynthesis; chorismate from D-erythrose 4-phosphate and phosphoenolpyruvate: step 3/7. Catalyzes a trans-dehydration via an enolate intermediate. In Glaesserella parasuis serovar 5 (strain SH0165) (Haemophilus parasuis), this protein is 3-dehydroquinate dehydratase.